We begin with the raw amino-acid sequence, 144 residues long: UPF0225 protein RSc0270 (144 aa).

It belongs to the UPF0225 family.

The sequence is that of UPF0225 protein RSc0270 from Ralstonia nicotianae (strain ATCC BAA-1114 / GMI1000) (Ralstonia solanacearum).